We begin with the raw amino-acid sequence, 184 residues long: Outer-membrane lipoprotein carrier protein (184 aa).

The first 19 residues, 1 to 19 (MKAFLKILMVLIFVSVAYA), serve as a signal peptide directing secretion.

Belongs to the LolA family. Monomer.

It is found in the periplasm. Its function is as follows. Participates in the translocation of lipoproteins from the inner membrane to the outer membrane. Only forms a complex with a lipoprotein if the residue after the N-terminal Cys is not an aspartate (The Asp acts as a targeting signal to indicate that the lipoprotein should stay in the inner membrane). This is Outer-membrane lipoprotein carrier protein from Helicobacter pylori (strain P12).